Reading from the N-terminus, the 766-residue chain is Semaphorin-4E (766 aa).

Positions 1 to 24 (MMSLLAVLCVLYVWSPAMLTGGLG) are cleaved as a signal peptide. Residues 25–664 (STLDSLPRKT…LHHVKEKERT (640 aa)) are Extracellular-facing. The Sema domain occupies 27 to 499 (LDSLPRKTVP…SEVGVVQLSI (473 aa)). Residue asparagine 52 is glycosylated (N-linked (GlcNAc...) asparagine). Cystine bridges form between cysteine 100–cysteine 111, cysteine 129–cysteine 138, cysteine 261–cysteine 373, and cysteine 285–cysteine 329. Asparagine 433 carries N-linked (GlcNAc...) asparagine glycosylation. The region spanning 501 to 552 (ECGRYQTCLDCVLARDPHCGWDLDTEHCATINSIHRTRSSTVIQSLNDGDAS) is the PSI domain. Cystine bridges form between cysteine 502-cysteine 519 and cysteine 511-cysteine 528. The Ig-like C2-type domain occupies 555-640 (PAIGVSKPVN…QRKYQTQHVA (86 aa)). 2 N-linked (GlcNAc...) asparagine glycosylation sites follow: asparagine 564 and asparagine 612. Cysteine 577 and cysteine 623 are joined by a disulfide. The chain crosses the membrane as a helical span at residues 665–685 (LVAMVVILSLVLAALLIWNLY). Over 686–766 (KGHLSLPCLH…LKYIDDESEI (81 aa)) the chain is Cytoplasmic. The tract at residues 724 to 750 (FNSNNNHANDQRYSSSRETDRLSTTAG) is disordered.

This sequence belongs to the semaphorin family.

The protein localises to the membrane. The chain is Semaphorin-4E (sema4e) from Danio rerio (Zebrafish).